The sequence spans 152 residues: UPF0178 protein SaurJH9_0705 (152 aa).

It belongs to the UPF0178 family.

The polypeptide is UPF0178 protein SaurJH9_0705 (Staphylococcus aureus (strain JH9)).